Here is a 530-residue protein sequence, read N- to C-terminus: Autoinducer-2 kinase (530 aa).

This sequence belongs to the FGGY kinase family.

The protein resides in the cytoplasm. It carries out the reaction (S)-4,5-dihydroxypentane-2,3-dione + ATP = (2S)-2-hydroxy-3,4-dioxopentyl phosphate + ADP + H(+). Functionally, catalyzes the phosphorylation of autoinducer-2 (AI-2) to phospho-AI-2, which subsequently inactivates the transcriptional regulator LsrR and leads to the transcription of the lsr operon. Phosphorylates the ring-open form of (S)-4,5-dihydroxypentane-2,3-dione (DPD), which is the precursor to all AI-2 signaling molecules, at the C5 position. The protein is Autoinducer-2 kinase of Yersinia pseudotuberculosis serotype O:3 (strain YPIII).